A 128-amino-acid chain; its full sequence is MYDNLKSLGITQPEEIDRYSLRQEANNDILKIYFRKDKGEFFAKSVKFKYPRQRKTILSDNDSQGMREISEISPNLRYVIEELDRLCLRDRQEEDLKRKILDDLRHLESVVANKIAEIEADLEKLTGK.

It belongs to the UPF0325 family.

The sequence is that of UPF0325 protein NT01EI_0832 from Edwardsiella ictaluri (strain 93-146).